Here is a 410-residue protein sequence, read N- to C-terminus: Dipeptidase 1 (410 aa).

Positions 1–16 are cleaved as a signal peptide; the sequence is MWTSWWLWPLVAVCTA. Positions 36 and 38 each coordinate Zn(2+). Residue Asn-57 is glycosylated (N-linked (GlcNAc...) asparagine). Cysteines 87 and 170 form a disulfide. Residue Glu-141 participates in Zn(2+) binding. His-168 lines the substrate pocket. Zn(2+) contacts are provided by His-214 and His-235. A disulfide bridge connects residues Cys-242 and Cys-274. Residues Arg-246 and Asp-304 each contribute to the substrate site. Ser-384 is lipidated: GPI-anchor amidated serine. Positions 385–410 are cleaved as a propeptide — removed in mature form; sequence EAPSLHRRPGALLASLSLLLLSLGLL.

The protein belongs to the metallo-dependent hydrolases superfamily. Peptidase M19 family. In terms of assembly, homodimer; disulfide-linked. Requires Zn(2+) as cofactor.

The protein localises to the apical cell membrane. It is found in the cell projection. Its subcellular location is the microvillus membrane. The enzyme catalyses an L-aminoacyl-L-amino acid + H2O = 2 an L-alpha-amino acid. The catalysed reaction is leukotriene D4 + H2O = leukotriene E4 + glycine. It catalyses the reaction L-cystine-bis-glycine + 2 H2O = L-cystine + 2 glycine. It carries out the reaction a beta-lactam + H2O = a substituted beta-amino acid. The enzyme catalyses glycyldehydrophenylalanine + H2O = 2,3-didehydrophenylalanine + glycine. With respect to regulation, inhibited by L-penicillamine. Beta-lactamase activity is inhibited by cilastatin. Its function is as follows. Hydrolyzes a wide range of dipeptides including the conversion of leukotriene D4 to leukotriene E4. Hydrolyzes cystinyl-bis-glycine (cys-bis-gly) formed during glutathione degradation. Also possesses beta lactamase activity and hydrolytically inactivates beta-lactam antibiotics. Independently of its dipeptidase activity, acts as an adhesion receptor for neutrophil recruitment from bloodstream into inflamed lungs and liver. This is Dipeptidase 1 (DPEP1) from Oryctolagus cuniculus (Rabbit).